The sequence spans 317 residues: Probable RuBisCO transcriptional regulator (317 aa).

In terms of domain architecture, HTH lysR-type spans 6 to 63 (FTLDQLRILKAIAKEGSFKKAANSLYVSQPAISLQIQNLERQLNVALFERGNKKATLT). The segment at residues 23-42 (FKKAANSLYVSQPAISLQIQ) is a DNA-binding region (H-T-H motif).

The protein belongs to the LysR transcriptional regulatory family.

The protein resides in the plastid. Its subcellular location is the chloroplast. Trans-acting transcriptional regulator of RuBisCO genes (rbcL and rbcS) expression. The sequence is that of Probable RuBisCO transcriptional regulator (rbcR) from Porphyra purpurea (Red seaweed).